The chain runs to 868 residues: Translation initiation factor IF-2 (868 aa).

A compositionally biased stretch (basic and acidic residues) spans serine 199 to valine 209. The segment at serine 199–glutamate 269 is disordered. Positions arginine 249–glycine 260 are enriched in basic residues. One can recognise a tr-type G domain in the interval glycine 368–lysine 537. The interval glycine 377–threonine 384 is G1. Glycine 377–threonine 384 serves as a coordination point for GTP. The G2 stretch occupies residues glycine 402 to histidine 406. Residues aspartate 423 to glycine 426 form a G3 region. GTP is bound by residues aspartate 423–histidine 427 and asparagine 477–aspartate 480. A G4 region spans residues asparagine 477–aspartate 480. The segment at serine 513 to lysine 515 is G5.

Belongs to the TRAFAC class translation factor GTPase superfamily. Classic translation factor GTPase family. IF-2 subfamily.

It is found in the cytoplasm. In terms of biological role, one of the essential components for the initiation of protein synthesis. Protects formylmethionyl-tRNA from spontaneous hydrolysis and promotes its binding to the 30S ribosomal subunits. Also involved in the hydrolysis of GTP during the formation of the 70S ribosomal complex. The protein is Translation initiation factor IF-2 of Legionella pneumophila (strain Paris).